Here is a 258-residue protein sequence, read N- to C-terminus: Thiazole synthase (258 aa).

The Schiff-base intermediate with DXP role is filled by Lys100. Residues Gly161, 187–188 (AG), and 209–210 (NT) each bind 1-deoxy-D-xylulose 5-phosphate.

The protein belongs to the ThiG family. In terms of assembly, homotetramer. Forms heterodimers with either ThiH or ThiS.

The protein localises to the cytoplasm. The enzyme catalyses [ThiS sulfur-carrier protein]-C-terminal-Gly-aminoethanethioate + 2-iminoacetate + 1-deoxy-D-xylulose 5-phosphate = [ThiS sulfur-carrier protein]-C-terminal Gly-Gly + 2-[(2R,5Z)-2-carboxy-4-methylthiazol-5(2H)-ylidene]ethyl phosphate + 2 H2O + H(+). The protein operates within cofactor biosynthesis; thiamine diphosphate biosynthesis. In terms of biological role, catalyzes the rearrangement of 1-deoxy-D-xylulose 5-phosphate (DXP) to produce the thiazole phosphate moiety of thiamine. Sulfur is provided by the thiocarboxylate moiety of the carrier protein ThiS. In vitro, sulfur can be provided by H(2)S. In Campylobacter jejuni (strain RM1221), this protein is Thiazole synthase.